The primary structure comprises 190 residues: Cell division protein SepF (190 aa).

This sequence belongs to the SepF family. As to quaternary structure, homodimer. Interacts with FtsZ.

The protein resides in the cytoplasm. Its function is as follows. Cell division protein that is part of the divisome complex and is recruited early to the Z-ring. Probably stimulates Z-ring formation, perhaps through the cross-linking of FtsZ protofilaments. Its function overlaps with FtsA. The sequence is that of Cell division protein SepF from Synechococcus sp. (strain WH7803).